A 340-amino-acid polypeptide reads, in one-letter code: Entry-fusion complex protein OPG094 (340 aa).

Positions 1–20 (MGGGVSVELPKRDPPPGVPT) are disordered. Gly2 carries the N-myristoyl glycine; by host lipid modification. The Virion surface segment spans residues 2–319 (GGGVSVELPK…VQHNIKHSFD (318 aa)). The chain crosses the membrane as a helical; Signal-anchor for type II membrane protein span at residues 320 to 340 (LKLHLISLLSLLVIWILIVAI).

It belongs to the orthopoxvirus OPG086 family. Interacts with OPG143. Component of the entry fusion complex (EFC) composed of OPG053, OPG076, OPG086, OPG094, OPG095, OPG099, OPG107, OPG143, OPG104, OPG147 and OPG155. Except for OPG095 and OPG053, each of the EFC proteins is required for assembly or stability of the complex. In terms of processing, unglycosylated because produced in viral factories instead of the classic ER -Golgi route.

The protein resides in the virion membrane. Functionally, component of the entry fusion complex (EFC), which consists of 11 proteins. During cell infection, this complex mediates entry of the virion core into the host cytoplasm by a two-step mechanism consisting of lipid mixing of the viral and cellular membranes and subsequent pore formation. This is Entry-fusion complex protein OPG094 (OPG094) from Cynomys gunnisoni (Gunnison's prairie dog).